Reading from the N-terminus, the 376-residue chain is Bifunctional enzyme IspD/IspF (376 aa).

The 2-C-methyl-D-erythritol 4-phosphate cytidylyltransferase stretch occupies residues 1 to 220; it reads MRIAAILVAG…RSMSISMIPR (220 aa). A 2-C-methyl-D-erythritol 2,4-cyclodiphosphate synthase region spans residues 220 to 376; it reads RIGTGYDVHA…QAAVIIMIPA (157 aa). Asp226 and His228 together coordinate a divalent metal cation. 4-CDP-2-C-methyl-D-erythritol 2-phosphate contacts are provided by residues 226–228 and 252–253; these read DVH and HS. His260 is a binding site for a divalent metal cation. 4-CDP-2-C-methyl-D-erythritol 2-phosphate is bound by residues 274–276, 350–353, Phe357, and Arg360; these read DIG and TTSE.

In the N-terminal section; belongs to the IspD/TarI cytidylyltransferase family. IspD subfamily. It in the C-terminal section; belongs to the IspF family. A divalent metal cation serves as cofactor.

It carries out the reaction 2-C-methyl-D-erythritol 4-phosphate + CTP + H(+) = 4-CDP-2-C-methyl-D-erythritol + diphosphate. It catalyses the reaction 4-CDP-2-C-methyl-D-erythritol 2-phosphate = 2-C-methyl-D-erythritol 2,4-cyclic diphosphate + CMP. It functions in the pathway isoprenoid biosynthesis; isopentenyl diphosphate biosynthesis via DXP pathway; isopentenyl diphosphate from 1-deoxy-D-xylulose 5-phosphate: step 2/6. Its pathway is isoprenoid biosynthesis; isopentenyl diphosphate biosynthesis via DXP pathway; isopentenyl diphosphate from 1-deoxy-D-xylulose 5-phosphate: step 4/6. Bifunctional enzyme that catalyzes the formation of 4-diphosphocytidyl-2-C-methyl-D-erythritol from CTP and 2-C-methyl-D-erythritol 4-phosphate (MEP) (IspD), and catalyzes the conversion of 4-diphosphocytidyl-2-C-methyl-D-erythritol 2-phosphate (CDP-ME2P) to 2-C-methyl-D-erythritol 2,4-cyclodiphosphate (ME-CPP) with a corresponding release of cytidine 5-monophosphate (CMP) (IspF). The polypeptide is Bifunctional enzyme IspD/IspF (Granulibacter bethesdensis (strain ATCC BAA-1260 / CGDNIH1)).